Reading from the N-terminus, the 264-residue chain is Apolipoprotein A-I (264 aa).

The first 18 residues, 1 to 18 (MKAVVLAVAVLFLTGSQA), serve as a signal peptide directing secretion. Repeat copies occupy residues 67–88 (LNLL…EQLG) and 89–110 (HVSQ…EEMN). The segment at 67–264 (LNLLENWDTL…DQITKHVTTQ (198 aa)) is 10 X approximate tandem repeats. M109 carries the post-translational modification Methionine sulfoxide. The stretch at 111-121 (KDLEKVKKKVQ) is one 3; half-length repeat. 3 consecutive repeat copies span residues 122-143 (PFLD…HKVE), 144-165 (PLSL…EKLG), and 166-187 (PLGK…SHLR). The stretch at 188-207 (TYTEEMGQILAERLGAIKES) is one 7; truncated repeat. M193 carries the post-translational modification Methionine sulfoxide. Repeat 8 spans residues 208–229 (TSLAEYQTKASEHLRTFSKKAK). A 9; half-length repeat occupies 230–240 (PILEDLRQGLL). Residues 241-264 (PVAENFKTNIKNTFDQITKHVTTQ) form repeat 10.

It belongs to the apolipoprotein A1/A4/E family. Homodimer. Interacts with APOA1BP and CLU. Component of a sperm activating protein complex (SPAP), consisting of APOA1, an immunoglobulin heavy chain, an immunoglobulin light chain and albumin. Interacts with NDRG1. Interacts with SCGB3A2. Interacts with NAXE and YJEFN3. Glycosylated. Post-translationally, palmitoylated. In terms of processing, phosphorylation sites are present in the extracellular medium.

The protein localises to the secreted. Functionally, participates in the reverse transport of cholesterol from tissues to the liver for excretion by promoting cholesterol efflux from tissues and by acting as a cofactor for the lecithin cholesterol acyltransferase (LCAT). As part of the SPAP complex, activates spermatozoa motility. This Fukomys damarensis (Damaraland mole rat) protein is Apolipoprotein A-I (Apoa1).